Here is a 679-residue protein sequence, read N- to C-terminus: Penicillin-binding protein PbpB (679 aa).

The segment at 1 to 74 (MSRAAPRRAS…STRARRTRQV (74 aa)) is disordered. Residues 1-90 (MSRAAPRRAS…GASFVFRHRT (90 aa)) lie on the Cytoplasmic side of the membrane. The segment covering 42-54 (ARQAQEATKSRPA) has biased composition (polar residues). The chain crosses the membrane as a helical span at residues 91 to 111 (GNAVILVLMLVAATQLFFLQV). Residues 112-679 (SHAAGLRAQA…PGPPLVLQAT (568 aa)) lie on the Extracellular side of the membrane. Ser-386 functions as the Acyl-ester intermediate in the catalytic mechanism.

The protein belongs to the transpeptidase family. Interacts with Wag31. In terms of processing, cleaved by Rip1 in response to oxidative stress (H(2)O(2)), prevented by Wag31. Cleavage probably occurs near residues 102-103.

The protein localises to the cell membrane. It participates in cell wall biogenesis; peptidoglycan biosynthesis. Functionally, synthesis of cross-linked peptidoglycan from the lipid intermediates. The protein is Penicillin-binding protein PbpB (pbpB) of Mycobacterium tuberculosis (strain ATCC 25618 / H37Rv).